The primary structure comprises 154 residues: Urease accessory protein UreE (154 aa).

The tract at residues 134-154 is disordered; sequence PESGAYGKSGHNHGHSHSHED. The segment covering 143–154 has biased composition (basic residues); sequence GHNHGHSHSHED.

The protein belongs to the UreE family.

The protein localises to the cytoplasm. Its function is as follows. Involved in urease metallocenter assembly. Binds nickel. Probably functions as a nickel donor during metallocenter assembly. The chain is Urease accessory protein UreE from Alteromonas mediterranea (strain DSM 17117 / CIP 110805 / LMG 28347 / Deep ecotype).